We begin with the raw amino-acid sequence, 339 residues long: Photosystem II assembly lipoprotein Ycf48 (339 aa).

Residues 1 to 22 (MVIVKSWQKIFALLVVLLLCIG) form the signal peptide. C23 carries N-palmitoyl cysteine lipidation. The S-diacylglycerol cysteine moiety is linked to residue C23.

This sequence belongs to the Ycf48 family. In terms of assembly, part of early PSII assembly complexes which includes D1 (psbA) and PsbI; not found in mature PSII. Binds to the lumenal side of PSII complexes. Interacts with YidC.

Its subcellular location is the cellular thylakoid membrane. In terms of biological role, a factor required for optimal assembly of photosystem II (PSII), acting in the early stages of PSII assembly. Also plays a role in replacement of photodamaged D1 (psbA). Assists YidC in synthesis of chlorophyll-binding proteins. The protein is Photosystem II assembly lipoprotein Ycf48 of Trichormus variabilis (strain ATCC 29413 / PCC 7937) (Anabaena variabilis).